We begin with the raw amino-acid sequence, 348 residues long: Selenide, water dikinase (348 aa).

Selenocysteine 17 is an active-site residue. A non-standard amino acid (selenocysteine) is located at residue selenocysteine 17. ATP is bound by residues lysine 20 and 48–50 (TAD). Aspartate 51 lines the Mg(2+) pocket. ATP is bound by residues aspartate 68, aspartate 91, and 138–140 (GHT). Aspartate 91 contacts Mg(2+). Aspartate 226 is a Mg(2+) binding site.

This sequence belongs to the selenophosphate synthase 1 family. Class I subfamily. In terms of assembly, homodimer. It depends on Mg(2+) as a cofactor.

It catalyses the reaction hydrogenselenide + ATP + H2O = selenophosphate + AMP + phosphate + 2 H(+). Functionally, synthesizes selenophosphate from selenide and ATP. The chain is Selenide, water dikinase from Clostridioides difficile (strain 630) (Peptoclostridium difficile).